The sequence spans 216 residues: uncharacterized protein (216 aa).

This is an uncharacterized protein from Treponema pallidum (strain Nichols).